The sequence spans 72 residues: METQKLVSMISEALEKYQYPLSAKNIKAVIQKEHNVILPVGSINSILYSYTELFEKIDKTNTIYPPLWIRKN.

Belongs to the asfivirus I73R family.

Its subcellular location is the virion. This is an uncharacterized protein from Ornithodoros (relapsing fever ticks).